Consider the following 264-residue polypeptide: MILQLDNVSLKRNGKWILKDIHWKVEEKENWVLYGLNGAGKTALLNMLCSYYFPTSGEMQVLGHEFGKTELGEKLRRKIGLVSAALQQKLYPADSAFEIALSGAYASIGLYETPSKETREKAIGLLEDLGAIEYADRRYETLSQGEKQRALIARALMADPELLILDEPVTGLDFIAREKLLDTITYIANKENAPSILYVTHHAEEILPVFDKALLLKQGEVFGSGEIKEMLTDQILSAFFDTPIHVLWNQDRPFLTRAEPITNA.

An ABC transporter domain is found at 3–243 (LQLDNVSLKR…QILSAFFDTP (241 aa)). An ATP-binding site is contributed by 35 to 42 (GLNGAGKT).

The protein belongs to the ABC transporter superfamily.

This is an uncharacterized protein from Bacillus subtilis (strain 168).